The primary structure comprises 625 residues: Histone-lysine N-methyltransferase set9 (625 aa).

Positions 120-234 constitute an SET domain; the sequence is SPFEVTTTNR…IGEEITVSYG (115 aa). 5 disordered regions span residues 260 to 348, 368 to 405, 432 to 451, 457 to 476, and 582 to 625; these read PHVD…ETSI, GSAV…TSIG, ITGQ…DMLS, TDNP…HGVV, and VSFG…RMTM. 2 stretches are compositionally biased toward polar residues: residues 269–286 and 372–386; these read SKAS…NDSL and EVSQ…SSPS. Positions 462-473 are enriched in basic residues; sequence KPKRSRGSRWKH. Basic and acidic residues predominate over residues 593–610; sequence SEPRTETEDSEACDDRRN. Over residues 611–625 the composition is skewed to basic residues; sequence TRASRTRTRSLRMTM.

It belongs to the class V-like SAM-binding methyltransferase superfamily. Histone-lysine methyltransferase family. Suvar4-20 subfamily.

It is found in the nucleus. The protein localises to the chromosome. It catalyses the reaction L-lysyl(20)-[histone H4] + 3 S-adenosyl-L-methionine = N(6),N(6),N(6)-trimethyl-L-lysyl(20)-[histone H4] + 3 S-adenosyl-L-homocysteine + 3 H(+). In terms of biological role, histone methyltransferase that trimethylates 'Lys-20' of histone H4 to form H4K20me3. In Aspergillus oryzae (strain ATCC 42149 / RIB 40) (Yellow koji mold), this protein is Histone-lysine N-methyltransferase set9 (set9).